The sequence spans 1170 residues: Putative DNA topoisomerase 2, mitochondrial (1170 aa).

ATP-binding positions include Asn-106, Asn-135, 163–165 (SSN), 176–183 (GRNGYGAK), and 396–398 (QTK). The region spanning 475 to 590 (CTLILTEGDS…SLVHTDGFIQ (116 aa)) is the Toprim domain. 3 residues coordinate Mg(2+): Glu-481, Asp-559, and Asp-561. The region spanning 722-1157 (IPSLIDGLKP…DWKSVWRSEL (436 aa)) is the Topo IIA-type catalytic domain. The O-(5'-phospho-DNA)-tyrosine intermediate role is filled by Tyr-813.

It belongs to the type II topoisomerase family. As to quaternary structure, homodimer. Mg(2+) is required as a cofactor. Mn(2+) serves as cofactor. Requires Ca(2+) as cofactor.

It localises to the mitochondrion. It catalyses the reaction ATP-dependent breakage, passage and rejoining of double-stranded DNA.. Control of topological states of DNA by transient breakage and subsequent rejoining of DNA strands. Topoisomerase II makes double-strand breaks. This is Putative DNA topoisomerase 2, mitochondrial from Caenorhabditis elegans.